We begin with the raw amino-acid sequence, 228 residues long: 2-phospho-L-lactate guanylyltransferase (228 aa).

The protein belongs to the CofC family. As to quaternary structure, homodimer.

It catalyses the reaction (2S)-2-phospholactate + GTP + H(+) = (2S)-lactyl-2-diphospho-5'-guanosine + diphosphate. Its pathway is cofactor biosynthesis; coenzyme F420 biosynthesis. Functionally, guanylyltransferase that catalyzes the activation of (2S)-2-phospholactate (2-PL) as (2S)-lactyl-2-diphospho-5'-guanosine, via the condensation of 2-PL with GTP. It is involved in the biosynthesis of coenzyme F420, a hydride carrier cofactor. The chain is 2-phospho-L-lactate guanylyltransferase from Methanosphaera stadtmanae (strain ATCC 43021 / DSM 3091 / JCM 11832 / MCB-3).